A 374-amino-acid chain; its full sequence is Potassium channel subfamily K member 9 (374 aa).

Residues 1–8 (MKRQNVRT) lie on the Cytoplasmic side of the membrane. Residues 9 to 29 (LSLIVCTFTYLLVGAAVFDAL) traverse the membrane as a helical segment. The Extracellular portion of the chain corresponds to 30–88 (ESDHEMREEEKLKAEEIRIKGKYNISSEDYRQLELVILQSEPHRAGVQWKFAGSFYFAI). N53 carries an N-linked (GlcNAc...) asparagine glycan. The pore-forming intramembrane region spans 89-101 (TVITTIGYGHAAP). 4 residues coordinate K(+): T93, I94, G95, and Y96. The tract at residues 93–98 (TIGYGH) is selectivity filter 1. Over 102–107 (GTDAGK) the chain is Extracellular. A helical transmembrane segment spans residues 108–128 (AFCMFYAVLGIPLTLVMFQSL). Residues 129-158 (GERMNTFVRYLLKRIKKCCGMRNTDVSMEN) lie on the Cytoplasmic side of the membrane. The helical transmembrane segment at 159 to 179 (MVTVGFFSCMGTLCIGAAAFS) threads the bilayer. At 180-194 (QCEEWSFFHAYYYCF) the chain is on the extracellular side. Positions 195–207 (ITLTTIGFGDYVA) form an intramembrane region, pore-forming. 4 residues coordinate K(+): T199, I200, G201, and F202. Residues 199-204 (TIGFGD) are selectivity filter 2. The Extracellular segment spans residues 208 to 218 (LQTKGALQKKP). The chain crosses the membrane as a helical span at residues 219–239 (LYVAFSFMYILVGLTVIGAFL). Over 240–374 (NLVVLRFLTM…QRLMKRRKSV (135 aa)) the chain is Cytoplasmic. Positions 243–248 (VLRFLT) are X-gate.

Belongs to the two pore domain potassium channel (TC 1.A.1.8) family. As to quaternary structure, homodimer. Heterodimer with KCNK1. Heterodimer with KCNK3. As to expression, mainly found in the cerebellum. Also found in adrenal gland, kidney and lung.

Its subcellular location is the cell membrane. The protein resides in the mitochondrion inner membrane. It localises to the cell projection. It is found in the dendrite. The catalysed reaction is K(+)(in) = K(+)(out). The enzyme catalyses Na(+)(in) = Na(+)(out). Inhibited by extracellular acidification adopting a nonconductive conformation at pH 6.0. Inhibited by phorbol 12-myristate 13-acetate (PMA). In terms of biological role, k(+) channel that conducts voltage-dependent outward rectifying currents upon membrane depolarization. Voltage sensing is coupled to K(+) electrochemical gradient in an 'ion flux gating' mode where outward but not inward ion flow opens the gate. Changes ion selectivity and becomes permeable to Na(+) ions in response to extracellular acidification. Protonation of the pH sensor His-98 stabilizes C-type inactivation conformation likely converting the channel from outward K(+)-conducting, to inward Na(+)-conducting to nonconductive state. Homo- and heterodimerizes to form functional channels with distinct regulatory and gating properties. Allows K(+) currents with fast-gating kinetics important for the repolarization and hyperpolarization phases of action potentials. In granule neurons, hyperpolarizes the resting membrane potential to limit intrinsic neuronal excitability, but once the action potential threshold is reached, supports high-frequency action potential firing and increased neuronal excitability. Homomeric and/or heteromeric KCNK3:KCNK9 channels operate in cerebellar granule cells, whereas heteromeric KCNK1:KCNK9 enables currents in hippocampal dentate gyrus granule neurons. Dispensable for central chemosensory respiration i.e. breathing controlled by brainstem CO2/pH, it rather conducts pH-sensitive currents and controls the firing rate of serotonergic raphe neurons involved in potentiation of the respiratory chemoreflex. In retinal ganglion cells, mediates outward currents that regulate action potentials in response to acidification of the synaptic cleft. Involved in transmission of image-forming and nonimage-forming visual information in the retina. In adrenal gland, contributes to the maintenance of a hyperpolarized resting membrane potential of aldosterone-producing cells at zona glomerulosa and limits aldosterone release as part of a regulatory mechanism that controls arterial blood pressure and electrolyte homeostasis. In Homo sapiens (Human), this protein is Potassium channel subfamily K member 9.